The primary structure comprises 583 residues: Aspartate--tRNA ligase (583 aa).

Glu-174 is a binding site for L-aspartate. The tract at residues 198–201 (QITK) is aspartate. Residue Arg-220 coordinates L-aspartate. ATP-binding positions include 220 to 222 (RDE) and Gln-229. His-443 is an L-aspartate binding site. Glu-477 serves as a coordination point for ATP. Arg-484 lines the L-aspartate pocket. 529-532 (GLDR) is an ATP binding site.

The protein belongs to the class-II aminoacyl-tRNA synthetase family. Type 1 subfamily. As to quaternary structure, homodimer.

Its subcellular location is the cytoplasm. It catalyses the reaction tRNA(Asp) + L-aspartate + ATP = L-aspartyl-tRNA(Asp) + AMP + diphosphate. Its function is as follows. Catalyzes the attachment of L-aspartate to tRNA(Asp) in a two-step reaction: L-aspartate is first activated by ATP to form Asp-AMP and then transferred to the acceptor end of tRNA(Asp). The sequence is that of Aspartate--tRNA ligase from Streptococcus agalactiae serotype III (strain NEM316).